Here is a 508-residue protein sequence, read N- to C-terminus: ATP synthase subunit alpha (508 aa).

169-176 contributes to the ATP binding site; sequence GDRQTGKT.

It belongs to the ATPase alpha/beta chains family. F-type ATPases have 2 components, CF(1) - the catalytic core - and CF(0) - the membrane proton channel. CF(1) has five subunits: alpha(3), beta(3), gamma(1), delta(1), epsilon(1). CF(0) has three main subunits: a(1), b(2) and c(9-12). The alpha and beta chains form an alternating ring which encloses part of the gamma chain. CF(1) is attached to CF(0) by a central stalk formed by the gamma and epsilon chains, while a peripheral stalk is formed by the delta and b chains.

It is found in the cell inner membrane. It catalyses the reaction ATP + H2O + 4 H(+)(in) = ADP + phosphate + 5 H(+)(out). Its function is as follows. Produces ATP from ADP in the presence of a proton gradient across the membrane. The alpha chain is a regulatory subunit. This Allorhizobium ampelinum (strain ATCC BAA-846 / DSM 112012 / S4) (Agrobacterium vitis (strain S4)) protein is ATP synthase subunit alpha.